Consider the following 77-residue polypeptide: Acyl carrier protein (77 aa).

The 76-residue stretch at 1–76 (MDREQRIKEI…DVINYLNEKL (76 aa)) folds into the Carrier domain. Ser36 is subject to O-(pantetheine 4'-phosphoryl)serine.

It belongs to the acyl carrier protein (ACP) family. 4'-phosphopantetheine is transferred from CoA to a specific serine of apo-ACP by AcpS. This modification is essential for activity because fatty acids are bound in thioester linkage to the sulfhydryl of the prosthetic group.

It is found in the cytoplasm. It functions in the pathway lipid metabolism; fatty acid biosynthesis. Carrier of the growing fatty acid chain in fatty acid biosynthesis. In Hydrogenobaculum sp. (strain Y04AAS1), this protein is Acyl carrier protein.